The chain runs to 334 residues: Ornithine carbamoyltransferase (334 aa).

Residues 57–60 (STRT), arginine 108, and 135–138 (HPTQ) each bind carbamoyl phosphate. Residues asparagine 168, aspartate 232, and 236-237 (SM) each bind L-ornithine. Residues 274 to 275 (CL) and arginine 321 contribute to the carbamoyl phosphate site.

Belongs to the aspartate/ornithine carbamoyltransferase superfamily. OTCase family.

Its subcellular location is the cytoplasm. The enzyme catalyses carbamoyl phosphate + L-ornithine = L-citrulline + phosphate + H(+). The protein operates within amino-acid biosynthesis; L-arginine biosynthesis; L-arginine from L-ornithine and carbamoyl phosphate: step 1/3. Functionally, reversibly catalyzes the transfer of the carbamoyl group from carbamoyl phosphate (CP) to the N(epsilon) atom of ornithine (ORN) to produce L-citrulline. This chain is Ornithine carbamoyltransferase, found in Cutibacterium acnes (strain DSM 16379 / KPA171202) (Propionibacterium acnes).